The primary structure comprises 207 residues: LexA repressor (207 aa).

Positions 28 to 48 (VREIGEAVGLASSSTVHGHLS) form a DNA-binding region, H-T-H motif. Catalysis depends on for autocatalytic cleavage activity residues S130 and K168.

This sequence belongs to the peptidase S24 family. As to quaternary structure, homodimer.

It carries out the reaction Hydrolysis of Ala-|-Gly bond in repressor LexA.. Functionally, represses a number of genes involved in the response to DNA damage (SOS response), including recA and lexA. In the presence of single-stranded DNA, RecA interacts with LexA causing an autocatalytic cleavage which disrupts the DNA-binding part of LexA, leading to derepression of the SOS regulon and eventually DNA repair. The sequence is that of LexA repressor from Staphylococcus aureus (strain Mu3 / ATCC 700698).